Here is a 260-residue protein sequence, read N- to C-terminus: Thiazole synthase (260 aa).

The Schiff-base intermediate with DXP role is filled by Lys96. Residues Gly157, 184-185 (AG), and 206-207 (NT) contribute to the 1-deoxy-D-xylulose 5-phosphate site.

It belongs to the ThiG family. As to quaternary structure, homotetramer. Forms heterodimers with either ThiH or ThiS.

It is found in the cytoplasm. It carries out the reaction [ThiS sulfur-carrier protein]-C-terminal-Gly-aminoethanethioate + 2-iminoacetate + 1-deoxy-D-xylulose 5-phosphate = [ThiS sulfur-carrier protein]-C-terminal Gly-Gly + 2-[(2R,5Z)-2-carboxy-4-methylthiazol-5(2H)-ylidene]ethyl phosphate + 2 H2O + H(+). It participates in cofactor biosynthesis; thiamine diphosphate biosynthesis. In terms of biological role, catalyzes the rearrangement of 1-deoxy-D-xylulose 5-phosphate (DXP) to produce the thiazole phosphate moiety of thiamine. Sulfur is provided by the thiocarboxylate moiety of the carrier protein ThiS. In vitro, sulfur can be provided by H(2)S. The sequence is that of Thiazole synthase from Bradyrhizobium diazoefficiens (strain JCM 10833 / BCRC 13528 / IAM 13628 / NBRC 14792 / USDA 110).